The following is a 709-amino-acid chain: Kelch domain-containing protein STK_09390 (709 aa).

The first 22 residues, 1–22 (MKRNTLLALVLVILIFPTLSTA), serve as a signal peptide directing secretion. 6 Kelch repeats span residues 49–94 (KIFL…VCNN), 96–140 (LYVV…SYDY), 141–192 (KIYV…FNGS), 193–240 (ALFV…YYNG), 242–288 (MYLV…VQIG), and 290–340 (KLII…DTNA). Fibronectin type-III domains follow at residues 315–405 (PPPK…VPNP), 406–488 (PIIK…ASKA), 489–566 (NLTV…IYYI), and 568–643 (PASP…NDVR).

This chain is Kelch domain-containing protein STK_09390, found in Sulfurisphaera tokodaii (strain DSM 16993 / JCM 10545 / NBRC 100140 / 7) (Sulfolobus tokodaii).